Here is a 259-residue protein sequence, read N- to C-terminus: Proteasome subunit alpha (259 aa).

Residues 226-259 form a disordered region; the sequence is LAEGSATSATSATPGEAEAPATAPEGDVDTGSNG. The segment covering 227 to 250 has biased composition (low complexity); the sequence is AEGSATSATSATPGEAEAPATAPE.

Belongs to the peptidase T1A family. The 20S proteasome core is composed of 14 alpha and 14 beta subunits that assemble into four stacked heptameric rings, resulting in a barrel-shaped structure. The two inner rings, each composed of seven catalytic beta subunits, are sandwiched by two outer rings, each composed of seven alpha subunits. The catalytic chamber with the active sites is on the inside of the barrel. Has a gated structure, the ends of the cylinder being occluded by the N-termini of the alpha-subunits. Is capped by the proteasome-associated ATPase, ARC.

It is found in the cytoplasm. It functions in the pathway protein degradation; proteasomal Pup-dependent pathway. Its activity is regulated as follows. The formation of the proteasomal ATPase ARC-20S proteasome complex, likely via the docking of the C-termini of ARC into the intersubunit pockets in the alpha-rings, may trigger opening of the gate for substrate entry. Interconversion between the open-gate and close-gate conformations leads to a dynamic regulation of the 20S proteasome proteolysis activity. Its function is as follows. Component of the proteasome core, a large protease complex with broad specificity involved in protein degradation. This Streptosporangium roseum (strain ATCC 12428 / DSM 43021 / JCM 3005 / KCTC 9067 / NCIMB 10171 / NRRL 2505 / NI 9100) protein is Proteasome subunit alpha.